We begin with the raw amino-acid sequence, 238 residues long: RNA-free ribonuclease P (238 aa).

Belongs to the HARP family.

It catalyses the reaction Endonucleolytic cleavage of RNA, removing 5'-extranucleotides from tRNA precursor.. In terms of biological role, RNA-free RNase P that catalyzes the removal of the 5'-leader sequence from pre-tRNA to produce the mature 5'-terminus. This chain is RNA-free ribonuclease P, found in Hyperthermus butylicus (strain DSM 5456 / JCM 9403 / PLM1-5).